Consider the following 549-residue polypeptide: Glucose-6-phosphate isomerase (549 aa).

Catalysis depends on glutamate 353, which acts as the Proton donor. Active-site residues include histidine 384 and lysine 513.

Belongs to the GPI family.

The protein localises to the cytoplasm. It catalyses the reaction alpha-D-glucose 6-phosphate = beta-D-fructose 6-phosphate. Its pathway is carbohydrate biosynthesis; gluconeogenesis. It participates in carbohydrate degradation; glycolysis; D-glyceraldehyde 3-phosphate and glycerone phosphate from D-glucose: step 2/4. Catalyzes the reversible isomerization of glucose-6-phosphate to fructose-6-phosphate. In Brucella abortus (strain S19), this protein is Glucose-6-phosphate isomerase.